A 119-amino-acid chain; its full sequence is MTRIRRGYIARRRRTKIRLFASTFRGAHSRLTRTIIQQKMRALASSHRDRGRQKRNFRRLWITRINAAIREIGVSYSYSRSIKDLYKSQLLLNRKILAQIAISNTNCLYMISKEIIKFK.

This sequence belongs to the bacterial ribosomal protein bL20 family.

The protein localises to the plastid. The protein resides in the chloroplast. Functionally, binds directly to 23S ribosomal RNA and is necessary for the in vitro assembly process of the 50S ribosomal subunit. It is not involved in the protein synthesizing functions of that subunit. The polypeptide is Large ribosomal subunit protein bL20c (Nandina domestica (Heavenly bamboo)).